The chain runs to 119 residues: Holo-[acyl-carrier-protein] synthase (119 aa).

2 residues coordinate Mg(2+): Asp-8 and Glu-58.

Belongs to the P-Pant transferase superfamily. AcpS family. Mg(2+) serves as cofactor.

It localises to the cytoplasm. It catalyses the reaction apo-[ACP] + CoA = holo-[ACP] + adenosine 3',5'-bisphosphate + H(+). In terms of biological role, transfers the 4'-phosphopantetheine moiety from coenzyme A to a Ser of acyl-carrier-protein. This is Holo-[acyl-carrier-protein] synthase from Bacillus mycoides (strain KBAB4) (Bacillus weihenstephanensis).